Reading from the N-terminus, the 547-residue chain is Phenylalanine--tRNA ligase beta subunit (547 aa).

One can recognise a B5 domain in the interval 269 to 344; that stretch reads LDVRFMEVDV…IGYGYENITP (76 aa). Mg(2+) contacts are provided by aspartate 322, aspartate 328, glutamate 331, and aspartate 332.

Belongs to the phenylalanyl-tRNA synthetase beta subunit family. Type 2 subfamily. Tetramer of two alpha and two beta subunits. Mg(2+) serves as cofactor.

It is found in the cytoplasm. It carries out the reaction tRNA(Phe) + L-phenylalanine + ATP = L-phenylalanyl-tRNA(Phe) + AMP + diphosphate + H(+). The protein is Phenylalanine--tRNA ligase beta subunit of Archaeoglobus fulgidus (strain ATCC 49558 / DSM 4304 / JCM 9628 / NBRC 100126 / VC-16).